Consider the following 732-residue polypeptide: S-adenosyl-L-methionine-dependent tRNA 4-demethylwyosine synthase TYW1 (732 aa).

In terms of domain architecture, Flavodoxin-like spans 79-237; that stretch reads VKIFYGSQTG…DFRAWKTKFI (159 aa). FMN-binding positions include 85–89 and 176–208; these read SQTGT and VFGL…HRVM. Residues 248-314 form a disordered region; that stretch reads RKKSCGGHCK…HQSLNSIVDV (67 aa). A compositionally biased stretch (basic and acidic residues) spans 259–286; the sequence is GKCESHQHGSEEREEGSHEQDELHHRDT. The span at 287 to 301 shows a compositional bias: acidic residues; that stretch reads EEEEPFESSSEEEFG. One can recognise a Radical SAM core domain in the interval 400–644; it reads YGIESHRCME…VDLIPEYEIA (245 aa). Positions 416, 420, and 423 each coordinate [4Fe-4S] cluster.

This sequence belongs to the TYW1 family. Requires [4Fe-4S] cluster as cofactor.

The enzyme catalyses N(1)-methylguanosine(37) in tRNA(Phe) + pyruvate + S-adenosyl-L-methionine = 4-demethylwyosine(37) in tRNA(Phe) + 5'-deoxyadenosine + L-methionine + CO2 + H2O. It functions in the pathway tRNA modification; wybutosine-tRNA(Phe) biosynthesis. Functionally, probable component of the wybutosine biosynthesis pathway. Wybutosine is a hyper modified guanosine with a tricyclic base found at the 3'-position adjacent to the anticodon of eukaryotic phenylalanine tRNA. Catalyzes the condensation of N-methylguanine with 2 carbon atoms from pyruvate to form the tricyclic 4-demethylwyosine, an intermediate in wybutosine biosynthesis. This chain is S-adenosyl-L-methionine-dependent tRNA 4-demethylwyosine synthase TYW1 (TYW1), found in Homo sapiens (Human).